The sequence spans 301 residues: Epimerase family protein Mb2239 (301 aa).

The protein belongs to the NAD(P)-dependent epimerase/dehydratase family. SDR39U1 subfamily.

The sequence is that of Epimerase family protein Mb2239 from Mycobacterium bovis (strain ATCC BAA-935 / AF2122/97).